Reading from the N-terminus, the 321-residue chain is Biotin synthase (321 aa).

A Radical SAM core domain is found at 45-274 (FHGNRVDLCS…GALIRLCGGR (230 aa)). Cys-63, Cys-67, and Cys-70 together coordinate [4Fe-4S] cluster. [2Fe-2S] cluster contacts are provided by Cys-139, Cys-199, and Arg-269.

Belongs to the radical SAM superfamily. Biotin synthase family. As to quaternary structure, homodimer. It depends on [4Fe-4S] cluster as a cofactor. [2Fe-2S] cluster is required as a cofactor.

It carries out the reaction (4R,5S)-dethiobiotin + (sulfur carrier)-SH + 2 reduced [2Fe-2S]-[ferredoxin] + 2 S-adenosyl-L-methionine = (sulfur carrier)-H + biotin + 2 5'-deoxyadenosine + 2 L-methionine + 2 oxidized [2Fe-2S]-[ferredoxin]. It participates in cofactor biosynthesis; biotin biosynthesis; biotin from 7,8-diaminononanoate: step 2/2. Its function is as follows. Catalyzes the conversion of dethiobiotin (DTB) to biotin by the insertion of a sulfur atom into dethiobiotin via a radical-based mechanism. The sequence is that of Biotin synthase from Pelotomaculum thermopropionicum (strain DSM 13744 / JCM 10971 / SI).